We begin with the raw amino-acid sequence, 290 residues long: UPF0761 membrane protein YihY (290 aa).

The next 6 membrane-spanning stretches (helical) occupy residues leucine 44–phenylalanine 64, valine 104–leucine 124, phenylalanine 140–isoleucine 160, isoleucine 183–isoleucine 203, alanine 210–leucine 230, and valine 244–leucine 264.

The protein belongs to the UPF0761 family.

It is found in the cell inner membrane. The chain is UPF0761 membrane protein YihY from Escherichia coli O1:K1 / APEC.